We begin with the raw amino-acid sequence, 311 residues long: Mediator of RNA polymerase II transcription subunit 27 (311 aa).

Phosphoserine is present on Ser132. Lys134 carries the N6-methyllysine modification.

Belongs to the Mediator complex subunit 27 family. As to quaternary structure, component of the Mediator complex, which is composed of MED1, MED4, MED6, MED7, MED8, MED9, MED10, MED11, MED12, MED13, MED13L, MED14, MED15, MED16, MED17, MED18, MED19, MED20, MED21, MED22, MED23, MED24, MED25, MED26, MED27, MED29, MED30, MED31, CCNC, CDK8 and CDC2L6/CDK11. The MED12, MED13, CCNC and CDK8 subunits form a distinct module termed the CDK8 module. Mediator containing the CDK8 module is less active than Mediator lacking this module in supporting transcriptional activation. Individual preparations of the Mediator complex lacking one or more distinct subunits have been variously termed ARC, CRSP, DRIP, PC2, SMCC and TRAP.

The protein localises to the nucleus. In terms of biological role, component of the Mediator complex, a coactivator involved in the regulated transcription of nearly all RNA polymerase II-dependent genes. Mediator functions as a bridge to convey information from gene-specific regulatory proteins to the basal RNA polymerase II transcription machinery. Mediator is recruited to promoters by direct interactions with regulatory proteins and serves as a scaffold for the assembly of a functional preinitiation complex with RNA polymerase II and the general transcription factors. This chain is Mediator of RNA polymerase II transcription subunit 27 (Med27), found in Mus musculus (Mouse).